An 83-amino-acid polypeptide reads, in one-letter code: UPF0297 protein Moth_1643 (83 aa).

This sequence belongs to the UPF0297 family.

In Moorella thermoacetica (strain ATCC 39073 / JCM 9320), this protein is UPF0297 protein Moth_1643.